A 591-amino-acid chain; its full sequence is ATP-dependent RNA helicase DDX55 (591 aa).

The Q motif signature appears at 9–37 (WSSLPVALSPGVLRALQDLGFDRMTPVQS). Residues 40–223 (IPLFMSNKDV…RAGLRNPVRI (184 aa)) enclose the Helicase ATP-binding domain. 53–60 (AVTGSGKT) is a binding site for ATP. The DEAD box motif lies at 171 to 174 (DEAD). The Helicase C-terminal domain occupies 254–402 (KFNQLVHFLR…EMQPQRNVLD (149 aa)). Disordered stretches follow at residues 482–559 (DSIP…NDTR) and 571–591 (EEEFEKRLTGSQSKFKEAAAD). The span at 485-513 (PFKDKNREKQRQKQLEQQRKEREESEGKK) shows a compositional bias: basic and acidic residues. Residues 486–542 (FKDKNREKQRQKQLEQQRKEREESEGKKKFIKNKSWSKQKAKREKKRKLTAKRKREE) adopt a coiled-coil conformation. Residues 514-538 (KFIKNKSWSKQKAKREKKRKLTAKR) show a composition bias toward basic residues. Residues 533-562 (KLTAKRKREEGSDMEDEDMEELLNDTRLLK) are important for nuclear localization. A compositionally biased stretch (acidic residues) spans 544-555 (SDMEDEDMEELL).

The protein belongs to the DEAD box helicase family. DDX55/SPB4 subfamily. In terms of assembly, interacts with 28S rRNA. Interacts with double-stranded RNA substrates in vitro; the interaction stimulates ATPase activity.

It localises to the nucleus. Its subcellular location is the nucleoplasm. The enzyme catalyses ATP + H2O = ADP + phosphate + H(+). Probable ATP-binding RNA helicase. Has ATPase activity and is involved in the maturation of precursor large subunit rRNAs. The polypeptide is ATP-dependent RNA helicase DDX55 (DDX55) (Gallus gallus (Chicken)).